The primary structure comprises 350 residues: Cephaeline 6'-O-methyltransferase CiOMT (350 aa).

5 residues coordinate S-adenosyl-L-methionine: Gly193, Asp216, Asp236, Met237, and Lys250. Residue His254 is the Proton acceptor of the active site.

The protein belongs to the class I-like SAM-binding methyltransferase superfamily. Cation-independent O-methyltransferase family.

Its subcellular location is the cytoplasm. It is found in the cytosol. The catalysed reaction is 7'-O-demethylcephaeline + S-adenosyl-L-methionine = cephaeline + S-adenosyl-L-homocysteine + H(+). It catalyses the reaction cephaeline + S-adenosyl-L-methionine = emetine + S-adenosyl-L-homocysteine + H(+). Its pathway is alkaloid biosynthesis. With respect to regulation, inhibited by Co(2+), Ni(2+), Zn(2+) and Mn(2+) ions. Its function is as follows. O-methyltransferase involved in the biosynthesis of ipecac and benzylisoquinoline monoterpenoid-isoquinoline alkaloids natural products, starting by the condensation of dopamine and secologanin, and including emetine and cephaeline, drugs used both as anti-protozoal (e.g. treatment of ameobiasis) and as emetic agents. Catalyzes successively the 7'-O-methylation of 7'-O-demethylcephaeline to produce cephaeline, and its 6'-O-methylation to produce emetine. The sequence is that of Cephaeline 6'-O-methyltransferase CiOMT from Carapichea ipecacuanha (Ipecac).